Here is an 864-residue protein sequence, read N- to C-terminus: A-kinase anchor protein 3 (864 aa).

Ser-12 is modified (phosphoserine; by STK33). A PKA-RII subunit binding domain region spans residues 125-138 (VSFYANRLTNLVIA). Disordered regions lie at residues 190 to 235 (NISS…DKPG) and 251 to 281 (AGDAKEGGRSLPGDQKLFRTSPDNRPDDFSN). Polar residues predominate over residues 204–218 (SGSSQAPGLRYTSTL). Ser-206 is subject to Phosphoserine. Residues 219–235 (KIKESTKEGKCPDDKPG) are compositionally biased toward basic and acidic residues. Ser-405 carries the phosphoserine modification. Position 406 is a phosphotyrosine (Tyr-406). Residues 619 to 638 (VHEQNTQEEEIHPCERPKTP) form a disordered region. Residues 627-638 (EEIHPCERPKTP) show a composition bias toward basic and acidic residues.

The protein belongs to the AKAP110 family. In terms of assembly, interacts with ROPN1 and ROPN1L. Interacts with QRICH2. In terms of processing, phosphorylated by STK33 during sperm flagella assembly. Phosphorylated on tyrosine.

Its subcellular location is the cytoplasmic vesicle. It is found in the secretory vesicle. It localises to the acrosome. The protein resides in the cell projection. The protein localises to the cilium. Its subcellular location is the flagellum. Structural component of sperm fibrous sheath. Required for the formation of the subcellular structure of the sperm flagellum, sperm motility and male fertility. This chain is A-kinase anchor protein 3, found in Mus musculus (Mouse).